The primary structure comprises 425 residues: Tyrosine--tRNA ligase (425 aa).

Tyrosine 37 is an L-tyrosine binding site. Positions 42–51 match the 'HIGH' region motif; it reads PTADSLHLGH. Residues tyrosine 174 and glutamine 178 each coordinate L-tyrosine. Residues 234-238 carry the 'KMSKS' region motif; the sequence is KFGKS. Lysine 237 lines the ATP pocket. Positions 357–422 constitute an S4 RNA-binding domain; sequence DGLIDALAAS…RGKKLYALLV (66 aa).

Belongs to the class-I aminoacyl-tRNA synthetase family. TyrS type 1 subfamily. Homodimer.

It is found in the cytoplasm. The catalysed reaction is tRNA(Tyr) + L-tyrosine + ATP = L-tyrosyl-tRNA(Tyr) + AMP + diphosphate + H(+). Catalyzes the attachment of tyrosine to tRNA(Tyr) in a two-step reaction: tyrosine is first activated by ATP to form Tyr-AMP and then transferred to the acceptor end of tRNA(Tyr). The protein is Tyrosine--tRNA ligase of Laribacter hongkongensis (strain HLHK9).